A 760-amino-acid polypeptide reads, in one-letter code: Transferrin receptor protein 1 (760 aa).

Residues 1-65 (MMDQARSAFS…VTKPKRCGGS (65 aa)) are Cytoplasmic-facing. Positions 1–67 (MMDQARSAFS…KPKRCGGSIC (67 aa)) are mediates interaction with SH3BP4. A phosphoserine mark is found at Ser-10 and Ser-19. Tyr-20 is subject to Phosphotyrosine. The Endocytosis signal signature appears at 20–23 (YTRF). At Thr-21 the chain carries Phosphothreonine. Residue Ser-24 is modified to Phosphoserine. The Stop-transfer sequence signature appears at 58 to 61 (KPKR). Residues Cys-62 and Cys-67 are each lipidated (S-palmitoyl cysteine). Residues 66–86 (ICYGTIAVIIFFLIGFMIGYL) traverse the membrane as a helical; Signal-anchor for type II membrane protein segment. Over 87-760 (GYCKGVEPKT…GDVWDIDNEF (674 aa)) the chain is Extracellular. The PA domain occupies 223 to 313 (SKAATVTGKL…GTGDPYTPGF (91 aa)). N-linked (GlcNAc...) asparagine glycans are attached at residues Asn-251 and Asn-317. The interval 569–760 (TMDTYKELTE…GDVWDIDNEF (192 aa)) is ligand-binding. Residues 646-648 (RGD) carry the Cell attachment site motif. Asn-722 and Asn-727 each carry an N-linked (GlcNAc...) asparagine glycan.

Belongs to the peptidase M28 family. M28B subfamily. In terms of assembly, homodimer; disulfide-linked. Binds one transferrin or HFE molecule per subunit. Interacts with SH3BP4. Interacts with STEAP3; facilitates TFRC endocytosis in erythroid precursor cells. Stearoylated by ZDHHC6 which inhibits TFRC-mediated activation of the JNK pathway and promotes mitochondrial fragmentation. Stearoylation does not affect iron uptake.

The protein resides in the cell membrane. It is found in the melanosome. In terms of biological role, cellular uptake of iron occurs via receptor-mediated endocytosis of ligand-occupied transferrin receptor into specialized endosomes. Endosomal acidification leads to iron release. The apotransferrin-receptor complex is then recycled to the cell surface with a return to neutral pH and the concomitant loss of affinity of apotransferrin for its receptor. Transferrin receptor is necessary for development of erythrocytes and the nervous system. Positively regulates T and B cell proliferation through iron uptake. Acts as a lipid sensor that regulates mitochondrial fusion by regulating activation of the JNK pathway. When dietary levels of stearate (C18:0) are low, promotes activation of the JNK pathway, resulting in HUWE1-mediated ubiquitination and subsequent degradation of the mitofusin MFN2 and inhibition of mitochondrial fusion. When dietary levels of stearate (C18:0) are high, TFRC stearoylation inhibits activation of the JNK pathway and thus degradation of the mitofusin MFN2. Mediates uptake of NICOL1 into fibroblasts where it may regulate extracellular matrix production. The protein is Transferrin receptor protein 1 (TFRC) of Pongo abelii (Sumatran orangutan).